Consider the following 467-residue polypeptide: Methionine aminopeptidase 2-1 (467 aa).

The segment covering 1–10 has biased composition (basic and acidic residues); the sequence is MGSKSPDGHR. The tract at residues 1 to 105 is disordered; that stretch reads MGSKSPDGHR…TPPRVSLPSI (105 aa). The segment covering 43–55 has biased composition (acidic residues); sequence DGDDEDEDGDDDG. The segment covering 75-90 has biased composition (basic residues); the sequence is KKRKRKSNKKKKKKTS. His219 is a substrate binding site. Residues Asp240, Asp251, and His320 each coordinate a divalent metal cation. Substrate is bound at residue His328. Glu353 and Glu448 together coordinate a divalent metal cation.

This sequence belongs to the peptidase M24A family. Methionine aminopeptidase eukaryotic type 2 subfamily. It depends on Co(2+) as a cofactor. The cofactor is Zn(2+). Requires Mn(2+) as cofactor. Fe(2+) is required as a cofactor.

Its subcellular location is the cytoplasm. It catalyses the reaction Release of N-terminal amino acids, preferentially methionine, from peptides and arylamides.. Cotranslationally removes the N-terminal methionine from nascent proteins. The N-terminal methionine is often cleaved when the second residue in the primary sequence is small and uncharged (Met-Ala-, Cys, Gly, Pro, Ser, Thr, or Val). The sequence is that of Methionine aminopeptidase 2-1 from Arthroderma gypseum (strain ATCC MYA-4604 / CBS 118893) (Microsporum gypseum).